The primary structure comprises 337 residues: Eukaryotic translation initiation factor 3 subunit H (337 aa).

Positions 21–153 (VQCDGLAVMK…LKAYRLTPQA (133 aa)) constitute an MPN domain.

Belongs to the eIF-3 subunit H family. As to quaternary structure, component of the eukaryotic translation initiation factor 3 (eIF-3) complex. The eIF-3 complex interacts with pix. Interacts with mxt.

The protein localises to the cytoplasm. Component of the eukaryotic translation initiation factor 3 (eIF-3) complex, which is involved in protein synthesis of a specialized repertoire of mRNAs and, together with other initiation factors, stimulates binding of mRNA and methionyl-tRNAi to the 40S ribosome. The eIF-3 complex specifically targets and initiates translation of a subset of mRNAs involved in cell proliferation. The sequence is that of Eukaryotic translation initiation factor 3 subunit H from Drosophila willistoni (Fruit fly).